The chain runs to 621 residues: Chaperone protein HtpG (621 aa).

The tract at residues Met1–Arg341 is a; substrate-binding. A b region spans residues Glu342–Asn547. Positions Phe548–Leu621 are c.

Belongs to the heat shock protein 90 family. In terms of assembly, homodimer.

The protein localises to the cytoplasm. Functionally, molecular chaperone. Has ATPase activity. In Helicobacter pylori (strain HPAG1), this protein is Chaperone protein HtpG.